The chain runs to 361 residues: 3-dehydroquinate synthase (361 aa).

NAD(+) is bound by residues Asn41, 70 to 75 (DGEQYK), 104 to 108 (GVIGD), 128 to 129 (TT), Lys141, Lys150, 150 to 151 (KN), and 168 to 171 (CLTT). Residues Glu183, His246, and His263 each contribute to the Zn(2+) site.

The protein belongs to the sugar phosphate cyclases superfamily. Dehydroquinate synthase family. It depends on NAD(+) as a cofactor. The cofactor is Co(2+). Zn(2+) serves as cofactor.

The protein resides in the cytoplasm. The enzyme catalyses 7-phospho-2-dehydro-3-deoxy-D-arabino-heptonate = 3-dehydroquinate + phosphate. It functions in the pathway metabolic intermediate biosynthesis; chorismate biosynthesis; chorismate from D-erythrose 4-phosphate and phosphoenolpyruvate: step 2/7. Functionally, catalyzes the conversion of 3-deoxy-D-arabino-heptulosonate 7-phosphate (DAHP) to dehydroquinate (DHQ). The chain is 3-dehydroquinate synthase from Vibrio cholerae serotype O1 (strain ATCC 39315 / El Tor Inaba N16961).